The chain runs to 95 residues: Glutamyl-tRNA(Gln) amidotransferase subunit C (95 aa).

Belongs to the GatC family. As to quaternary structure, heterotrimer of A, B and C subunits.

It carries out the reaction L-glutamyl-tRNA(Gln) + L-glutamine + ATP + H2O = L-glutaminyl-tRNA(Gln) + L-glutamate + ADP + phosphate + H(+). It catalyses the reaction L-aspartyl-tRNA(Asn) + L-glutamine + ATP + H2O = L-asparaginyl-tRNA(Asn) + L-glutamate + ADP + phosphate + 2 H(+). In terms of biological role, allows the formation of correctly charged Asn-tRNA(Asn) or Gln-tRNA(Gln) through the transamidation of misacylated Asp-tRNA(Asn) or Glu-tRNA(Gln) in organisms which lack either or both of asparaginyl-tRNA or glutaminyl-tRNA synthetases. The reaction takes place in the presence of glutamine and ATP through an activated phospho-Asp-tRNA(Asn) or phospho-Glu-tRNA(Gln). This is Glutamyl-tRNA(Gln) amidotransferase subunit C from Mesorhizobium japonicum (strain LMG 29417 / CECT 9101 / MAFF 303099) (Mesorhizobium loti (strain MAFF 303099)).